The chain runs to 97 residues: Large ribosomal subunit protein uL23 (97 aa).

The protein belongs to the universal ribosomal protein uL23 family. As to quaternary structure, part of the 50S ribosomal subunit. Contacts protein L29, and trigger factor when it is bound to the ribosome.

One of the early assembly proteins it binds 23S rRNA. One of the proteins that surrounds the polypeptide exit tunnel on the outside of the ribosome. Forms the main docking site for trigger factor binding to the ribosome. The chain is Large ribosomal subunit protein uL23 from Myxococcus xanthus (strain DK1622).